We begin with the raw amino-acid sequence, 187 residues long: Large ribosomal subunit protein uL5 (187 aa).

It belongs to the universal ribosomal protein uL5 family. In terms of assembly, part of the 50S ribosomal subunit; part of the 5S rRNA/L5/L18/L25 subcomplex. Contacts the 5S rRNA and the P site tRNA. Forms a bridge to the 30S subunit in the 70S ribosome.

In terms of biological role, this is one of the proteins that bind and probably mediate the attachment of the 5S RNA into the large ribosomal subunit, where it forms part of the central protuberance. In the 70S ribosome it contacts protein S13 of the 30S subunit (bridge B1b), connecting the 2 subunits; this bridge is implicated in subunit movement. Contacts the P site tRNA; the 5S rRNA and some of its associated proteins might help stabilize positioning of ribosome-bound tRNAs. The polypeptide is Large ribosomal subunit protein uL5 (Ruegeria sp. (strain TM1040) (Silicibacter sp.)).